The following is a 189-amino-acid chain: dCTP deaminase (189 aa).

DCTP-binding positions include 112–117 (KSTYAR), 136–138 (TLE), Q157, Y171, and Q181. E138 (proton donor/acceptor) is an active-site residue.

The protein belongs to the dCTP deaminase family. As to quaternary structure, homotrimer.

The catalysed reaction is dCTP + H2O + H(+) = dUTP + NH4(+). The protein operates within pyrimidine metabolism; dUMP biosynthesis; dUMP from dCTP (dUTP route): step 1/2. Its function is as follows. Catalyzes the deamination of dCTP to dUTP. This is dCTP deaminase from Alcanivorax borkumensis (strain ATCC 700651 / DSM 11573 / NCIMB 13689 / SK2).